The chain runs to 123 residues: Glycophorin-B (123 aa).

The first 19 residues, 1–19, serve as a signal peptide directing secretion; the sequence is MYGKIIFVLLLSEIVSISA. A helical transmembrane segment spans residues 93-113; that stretch reads VVIILIILCVMAGVIGTILLI.

The protein belongs to the glycophorin-A family. As to quaternary structure, component of the ankyrin-1 complex in the erythrocyte, composed of ANK1, RHCE, RHAG, SLC4A1, EPB42, GYPA, GYPB and AQP1. Interacts (via the N-terminal) with RHAG; this interaction bridges the (RHAG)2(RHCE) heterotrimer with the SLC4A1 Band 3 I dimer complexed with GYPA. The N-terminal extracellular domain is heavily glycosylated on serine and threonine residues.

The protein resides in the cell membrane. In terms of biological role, component of the ankyrin-1 complex, a multiprotein complex involved in the stability and shape of the erythrocyte membrane. This chain is Glycophorin-B, found in Pan troglodytes (Chimpanzee).